A 218-amino-acid polypeptide reads, in one-letter code: Small ribosomal subunit protein mS34 (218 aa).

This sequence belongs to the mitochondrion-specific ribosomal protein mS34 family. In terms of assembly, component of the mitochondrial ribosome small subunit (28S) which comprises a 12S rRNA and about 30 distinct proteins. As to expression, widely expressed (at protein liver).

The protein localises to the mitochondrion. Its function is as follows. Required for mitochondrial translation, plays a role in maintaining the stability of the small ribosomal subunit and the 12S rRNA that are required for mitoribosome formation. This is Small ribosomal subunit protein mS34 (Mrps34) from Mus musculus (Mouse).